The following is a 648-amino-acid chain: Serine/arginine repetitive matrix protein 3 (648 aa).

The tract at residues 1 to 44 (MSSTVNNGATGMPAPPDAANGFPQPGASSGSWPRAEEELRAAEP) is disordered. A CWF21 domain is found at 55–98 (LDHERKRRVELKCMELQEMMEEQGYSEEEIRQKVGTFRQMLMEK). The span at 99–109 (EGVLTREDRPG) shows a compositional bias: basic and acidic residues. Disordered stretches follow at residues 99–139 (EGVL…DGPV) and 154–648 (YRTK…SGGF). Basic residues-rich tracts occupy residues 168-186 (PKKKKKKKGSHRRSRKKRR), 199-211 (LRKKKKNVKKHRR), and 219-243 (RRKRRYRSRSLKSKRKEKNKERKRP). 2 stretches are compositionally biased toward low complexity: residues 257–276 (SASSHSPSMSSHYSDSGSPS) and 289–317 (TGSQRSSGSRSPSPSGGSGWGSPQQNGGS). Basic residues predominate over residues 381–409 (ARRRRRRRRRRRSRSSANAPRRRGRRRTK). 3 stretches are compositionally biased toward low complexity: residues 414 to 428 (RGSSRSLSGAHSSSD), 461 to 471 (RPASTSPSPGT), and 493 to 502 (SWSSSRSPSK). The span at 525 to 544 (LGRDKDSEGRARHAEAEAAR) shows a compositional bias: basic and acidic residues. Over residues 545–560 (TRRRSRSYSPIRKRRR) the composition is skewed to basic residues. Residues 579 to 648 (IPYYRPSPSS…SRSSSESGGF (70 aa)) show a composition bias toward low complexity.

This sequence belongs to the CWC21 family.

In terms of biological role, may play a role in regulating breast cancer cell invasiveness. May be involved in RYBP-mediated breast cancer progression. The sequence is that of Serine/arginine repetitive matrix protein 3 (Srrm3) from Mus musculus (Mouse).